The following is a 159-amino-acid chain: Regulatory protein RecX (159 aa).

Belongs to the RecX family.

The protein localises to the cytoplasm. Functionally, modulates RecA activity. This chain is Regulatory protein RecX, found in Ralstonia pickettii (strain 12J).